The sequence spans 452 residues: MFATSGAVAAGKPYSCSECGKSFCYSSVLLRHERAHGGDGRFRCLECGERCARAADLRAHRRTHAGQTLYICSECGQSFRHSGRLDLHLGAHRQRCRTCPCRTCGRRFPHLPALLLHRRRQHLPERPRRCPLCARTFRQSALLFHQARAHPLGTTSDPAAPPHRCAQCPRAFRSGAGLRSHARIHVSRSPTRPRVSDAHQCGVCGKCFGKSSTLTRHLQTHSGEKPFKCPECGKGFLESATLVRHQRTHTGEKPYACGDCGRCFSESSTLLRHRRSHQGERPHACATCGKGFGQRSDLVVHQRIHTGEKPFACPECGRRFSDRSDLTKHRRTHTGEKPYRCELCGKRFTCVSNLNVHRRNHAGHKPHKCPECSKAFSVASKLALHRKTHLGERPAECAECGKCFSHSRSLSQHQRAHTRARTAAAVAIQSAVGTALVFEGPAEQEKPGFSVS.

4 C2H2-type zinc fingers span residues Tyr-14–His-36, Phe-42–His-64, Tyr-70–His-92, and Cys-99–His-122. The C2H2-type 5; degenerate zinc-finger motif lies at Arg-128–His-150. 9 consecutive C2H2-type zinc fingers follow at residues His-163–His-185, His-199–His-221, Phe-227–His-249, Tyr-255–His-277, His-283–His-305, Phe-311–His-333, Tyr-339–His-361, His-367–His-389, and Ala-395–His-417.

This sequence belongs to the krueppel C2H2-type zinc-finger protein family.

It localises to the nucleus. Functionally, may be involved in transcriptional regulation. The protein is Zinc finger protein 672 of Homo sapiens (Human).